Here is a 174-residue protein sequence, read N- to C-terminus: ATP-dependent protease subunit HslV (174 aa).

Thr-2 is an active-site residue. Na(+) contacts are provided by Gly-157, Cys-160, and Thr-163.

The protein belongs to the peptidase T1B family. HslV subfamily. In terms of assembly, a double ring-shaped homohexamer of HslV is capped on each side by a ring-shaped HslU homohexamer. The assembly of the HslU/HslV complex is dependent on binding of ATP.

It localises to the cytoplasm. It carries out the reaction ATP-dependent cleavage of peptide bonds with broad specificity.. With respect to regulation, allosterically activated by HslU binding. In terms of biological role, protease subunit of a proteasome-like degradation complex believed to be a general protein degrading machinery. The polypeptide is ATP-dependent protease subunit HslV (Cellvibrio japonicus (strain Ueda107) (Pseudomonas fluorescens subsp. cellulosa)).